Here is a 471-residue protein sequence, read N- to C-terminus: Ribulose bisphosphate carboxylase large chain (471 aa).

Residues N119 and T169 each coordinate substrate. K171 acts as the Proton acceptor in catalysis. K173 is a binding site for substrate. Mg(2+) contacts are provided by K197, D199, and E200. K197 is subject to N6-carboxylysine. H290 acts as the Proton acceptor in catalysis. 3 residues coordinate substrate: R291, H323, and S375.

Belongs to the RuBisCO large chain family. Type I subfamily. As to quaternary structure, heterohexadecamer of 8 large chains and 8 small chains; disulfide-linked. The disulfide link is formed within the large subunit homodimers. The cofactor is Mg(2+). Post-translationally, the disulfide bond which can form in the large chain dimeric partners within the hexadecamer appears to be associated with oxidative stress and protein turnover.

It localises to the carboxysome. The catalysed reaction is 2 (2R)-3-phosphoglycerate + 2 H(+) = D-ribulose 1,5-bisphosphate + CO2 + H2O. It catalyses the reaction D-ribulose 1,5-bisphosphate + O2 = 2-phosphoglycolate + (2R)-3-phosphoglycerate + 2 H(+). Functionally, ruBisCO catalyzes two reactions: the carboxylation of D-ribulose 1,5-bisphosphate, the primary event in carbon dioxide fixation, as well as the oxidative fragmentation of the pentose substrate in the photorespiration process. Both reactions occur simultaneously and in competition at the same active site. This is Ribulose bisphosphate carboxylase large chain from Microcystis aeruginosa (strain NIES-843 / IAM M-2473).